The following is a 310-amino-acid chain: MHAYTLKAPAKINLLLEIIGDRPDGFHELVMVMQSVNLADIVELQPLSGDRIELFCNHPQVPCDQSNLAHRAARLMQEQFPGKGGVAITIDKKIPIGAGLAGGSADAAAVLVGLDLMWGLGLTQAELHTYAAKLGSDIPFCVSGGTALALGRGEELTPLPDLDQLYAVLAKYRSLSVATPWAYKTYRQQFSESYARDPEALEKRRREGHSVELLAAISHRDSQKVPQYLYNDLEKVVLPEHPQVQEIRDLFQSFGALGTMMSGSGPTVFGLADSRSKAELMATQLQTALPDPDLEILVTKFCSSGIQLLS.

Residue Lys11 is part of the active site. Residue 95 to 105 (PIGAGLAGGSA) participates in ATP binding. Asp137 is an active-site residue.

Belongs to the GHMP kinase family. IspE subfamily.

The catalysed reaction is 4-CDP-2-C-methyl-D-erythritol + ATP = 4-CDP-2-C-methyl-D-erythritol 2-phosphate + ADP + H(+). The protein operates within isoprenoid biosynthesis; isopentenyl diphosphate biosynthesis via DXP pathway; isopentenyl diphosphate from 1-deoxy-D-xylulose 5-phosphate: step 3/6. In terms of biological role, catalyzes the phosphorylation of the position 2 hydroxy group of 4-diphosphocytidyl-2C-methyl-D-erythritol. This chain is 4-diphosphocytidyl-2-C-methyl-D-erythritol kinase, found in Acaryochloris marina (strain MBIC 11017).